The chain runs to 1403 residues: DNA-directed RNA polymerase subunit beta' (1403 aa).

Zn(2+)-binding residues include Cys-71, Cys-73, Cys-86, and Cys-89. Positions 462, 464, and 466 each coordinate Mg(2+). Cys-811, Cys-885, Cys-892, and Cys-895 together coordinate Zn(2+).

The protein belongs to the RNA polymerase beta' chain family. The RNAP catalytic core consists of 2 alpha, 1 beta, 1 beta' and 1 omega subunit. When a sigma factor is associated with the core the holoenzyme is formed, which can initiate transcription. It depends on Mg(2+) as a cofactor. The cofactor is Zn(2+).

It catalyses the reaction RNA(n) + a ribonucleoside 5'-triphosphate = RNA(n+1) + diphosphate. Its function is as follows. DNA-dependent RNA polymerase catalyzes the transcription of DNA into RNA using the four ribonucleoside triphosphates as substrates. The sequence is that of DNA-directed RNA polymerase subunit beta' from Bartonella bacilliformis (strain ATCC 35685 / KC583 / Herrer 020/F12,63).